A 37-amino-acid polypeptide reads, in one-letter code: Lambda-hexatoxin-Hv1c (37 aa).

Intrachain disulfides connect C3–C17, C10–C22, C13–C14, and C16–C32.

This sequence belongs to the neurotoxin 11 (kappa toxin) family. Expressed by the venom gland.

The protein resides in the secreted. This excitatory toxin inhibits insect calcium-activated potassium (KCa) channels (Slo-type). Pan-neuronal expression in Drosophila is lethal but flies engineered to express the toxin only in clock neurons have defects in circadian rhythm but a normal lifespan. The chain is Lambda-hexatoxin-Hv1c from Hadronyche versuta (Blue mountains funnel-web spider).